Reading from the N-terminus, the 327-residue chain is Secondary metabolism regulator LAE1 (327 aa).

Belongs to the methyltransferase superfamily. LaeA methyltransferase family.

Its subcellular location is the nucleus. It catalyses the reaction L-methionyl-[protein] + S-adenosyl-L-methionine = S-methyl-L-methionyl-[protein] + S-adenosyl-L-homocysteine. Secondary metabolism regulator that controls the expression of the tenuazonic acid biosynthesis cluster. Methyltransferase that performs automethylation. No other methyl-accepting substrate has been identified yet. The protein is Secondary metabolism regulator LAE1 of Pyricularia oryzae (strain 70-15 / ATCC MYA-4617 / FGSC 8958) (Rice blast fungus).